Reading from the N-terminus, the 449-residue chain is Glutamyl-tRNA reductase (449 aa).

Substrate contacts are provided by residues 58-61, Ser121, 126-128, and Gln132; these read TCNR and ETQ. Cys59 acts as the Nucleophile in catalysis. Position 203–208 (203–208) interacts with NADP(+); the sequence is GLGEMA.

The protein belongs to the glutamyl-tRNA reductase family. Homodimer.

The catalysed reaction is (S)-4-amino-5-oxopentanoate + tRNA(Glu) + NADP(+) = L-glutamyl-tRNA(Glu) + NADPH + H(+). Its pathway is porphyrin-containing compound metabolism; protoporphyrin-IX biosynthesis; 5-aminolevulinate from L-glutamyl-tRNA(Glu): step 1/2. In terms of biological role, catalyzes the NADPH-dependent reduction of glutamyl-tRNA(Glu) to glutamate 1-semialdehyde (GSA). The polypeptide is Glutamyl-tRNA reductase (Helicobacter pylori (strain HPAG1)).